The following is a 126-amino-acid chain: Holo-[acyl-carrier-protein] synthase (126 aa).

Mg(2+) is bound by residues D9 and E57.

It belongs to the P-Pant transferase superfamily. AcpS family. It depends on Mg(2+) as a cofactor.

It is found in the cytoplasm. It carries out the reaction apo-[ACP] + CoA = holo-[ACP] + adenosine 3',5'-bisphosphate + H(+). Its function is as follows. Transfers the 4'-phosphopantetheine moiety from coenzyme A to a Ser of acyl-carrier-protein. The chain is Holo-[acyl-carrier-protein] synthase from Alteromonas mediterranea (strain DSM 17117 / CIP 110805 / LMG 28347 / Deep ecotype).